Consider the following 203-residue polypeptide: Small ribosomal subunit protein uS4 (203 aa).

Residues cysteine 93–asparagine 154 enclose the S4 RNA-binding domain.

The protein belongs to the universal ribosomal protein uS4 family. In terms of assembly, part of the 30S ribosomal subunit. Contacts protein S5. The interaction surface between S4 and S5 is involved in control of translational fidelity.

In terms of biological role, one of the primary rRNA binding proteins, it binds directly to 16S rRNA where it nucleates assembly of the body of the 30S subunit. Its function is as follows. With S5 and S12 plays an important role in translational accuracy. The protein is Small ribosomal subunit protein uS4 of Chloroherpeton thalassium (strain ATCC 35110 / GB-78).